A 256-amino-acid polypeptide reads, in one-letter code: Hydroxyacylglutathione hydrolase (256 aa).

His-55, His-57, Asp-59, His-60, His-113, Asp-130, and His-168 together coordinate Zn(2+).

This sequence belongs to the metallo-beta-lactamase superfamily. Glyoxalase II family. Monomer. Zn(2+) serves as cofactor.

It catalyses the reaction an S-(2-hydroxyacyl)glutathione + H2O = a 2-hydroxy carboxylate + glutathione + H(+). Its pathway is secondary metabolite metabolism; methylglyoxal degradation; (R)-lactate from methylglyoxal: step 2/2. Functionally, thiolesterase that catalyzes the hydrolysis of S-D-lactoyl-glutathione to form glutathione and D-lactic acid. The protein is Hydroxyacylglutathione hydrolase of Psychromonas ingrahamii (strain DSM 17664 / CCUG 51855 / 37).